A 258-amino-acid chain; its full sequence is UPF0246 protein YaaA (258 aa).

Belongs to the UPF0246 family.

The chain is UPF0246 protein YaaA from Escherichia coli (strain SE11).